The sequence spans 126 residues: Small ribosomal subunit protein uS12 (126 aa).

The disordered stretch occupies residues 1-26 (MPTINQLVRKGRASETTKSKSPALQD). Asp-89 carries the post-translational modification 3-methylthioaspartic acid. The tract at residues 102–126 (LDTQGVKDRRQARSKYGAKRAKAAK) is disordered. The segment covering 113 to 126 (ARSKYGAKRAKAAK) has biased composition (basic residues).

Belongs to the universal ribosomal protein uS12 family. Part of the 30S ribosomal subunit. Contacts proteins S8 and S17. May interact with IF1 in the 30S initiation complex.

In terms of biological role, with S4 and S5 plays an important role in translational accuracy. Interacts with and stabilizes bases of the 16S rRNA that are involved in tRNA selection in the A site and with the mRNA backbone. Located at the interface of the 30S and 50S subunits, it traverses the body of the 30S subunit contacting proteins on the other side and probably holding the rRNA structure together. The combined cluster of proteins S8, S12 and S17 appears to hold together the shoulder and platform of the 30S subunit. The chain is Small ribosomal subunit protein uS12 from Burkholderia mallei (strain ATCC 23344).